We begin with the raw amino-acid sequence, 343 residues long: Isopentenyl-diphosphate delta-isomerase (343 aa).

Residue 6-7 participates in substrate binding; that stretch reads RK. Residues S63, 64 to 66, S94, and N122 contribute to the FMN site; that span reads SMT. A substrate-binding site is contributed by 94–96; the sequence is SMR. Position 157 (Q157) interacts with substrate. Residue E158 coordinates Mg(2+). Residues K189, T219, 269-271, and 290-291 contribute to the FMN site; these read GLK and AG.

Belongs to the IPP isomerase type 2 family. In terms of assembly, homooctamer. Dimer of tetramers. Requires FMN as cofactor. NADPH is required as a cofactor. It depends on Mg(2+) as a cofactor.

The protein localises to the cytoplasm. The catalysed reaction is isopentenyl diphosphate = dimethylallyl diphosphate. Functionally, involved in the biosynthesis of isoprenoids. Catalyzes the 1,3-allylic rearrangement of the homoallylic substrate isopentenyl (IPP) to its allylic isomer, dimethylallyl diphosphate (DMAPP). This Rickettsia bellii (strain OSU 85-389) protein is Isopentenyl-diphosphate delta-isomerase.